The following is a 148-amino-acid chain: Holo-[acyl-carrier-protein] synthase (148 aa).

Positions 8 and 57 each coordinate Mg(2+).

The protein belongs to the P-Pant transferase superfamily. AcpS family. Mg(2+) serves as cofactor.

Its subcellular location is the cytoplasm. It catalyses the reaction apo-[ACP] + CoA = holo-[ACP] + adenosine 3',5'-bisphosphate + H(+). In terms of biological role, transfers the 4'-phosphopantetheine moiety from coenzyme A to a Ser of acyl-carrier-protein. The sequence is that of Holo-[acyl-carrier-protein] synthase from Ruegeria pomeroyi (strain ATCC 700808 / DSM 15171 / DSS-3) (Silicibacter pomeroyi).